Here is a 316-residue protein sequence, read N- to C-terminus: MQILLANPRGFCAGVDRAISIVENALAIYGAPIYVRHEVVHNRYVVDSLRQRGAIFIEQISEVPDGAILIFSAHGVSQAVRNEAKSRDLTVFDATCPLVTKVHMEVARASRRGEEAILIGHAGHPEVEGTMGQYSNPEGGMYLVESPEDVWTLNVKNEGKLSFMTQTTLSVDDTSDVIDALRKRFPKIVGPRKDDICYATTNRQEAVRALAEQADVVLVVGSKNSSNSNRLAELAQRMGRTAFLIDDAADIQEAWVKEAACVGVTAGASAPDILVQNVIARLREFGGGEAVTLEGREENIVFEVPKELRVDVREVE.

[4Fe-4S] cluster is bound at residue C12. 2 residues coordinate (2E)-4-hydroxy-3-methylbut-2-enyl diphosphate: H41 and H74. H41 and H74 together coordinate dimethylallyl diphosphate. The isopentenyl diphosphate site is built by H41 and H74. Position 96 (C96) interacts with [4Fe-4S] cluster. H124 provides a ligand contact to (2E)-4-hydroxy-3-methylbut-2-enyl diphosphate. Residue H124 coordinates dimethylallyl diphosphate. H124 provides a ligand contact to isopentenyl diphosphate. The active-site Proton donor is E126. Residue T167 participates in (2E)-4-hydroxy-3-methylbut-2-enyl diphosphate binding. C197 provides a ligand contact to [4Fe-4S] cluster. (2E)-4-hydroxy-3-methylbut-2-enyl diphosphate contacts are provided by S225, S226, N227, and S269. The dimethylallyl diphosphate site is built by S225, S226, N227, and S269. Residues S225, S226, N227, and S269 each contribute to the isopentenyl diphosphate site.

This sequence belongs to the IspH family. As to quaternary structure, homodimer. Requires [4Fe-4S] cluster as cofactor.

It carries out the reaction isopentenyl diphosphate + 2 oxidized [2Fe-2S]-[ferredoxin] + H2O = (2E)-4-hydroxy-3-methylbut-2-enyl diphosphate + 2 reduced [2Fe-2S]-[ferredoxin] + 2 H(+). The enzyme catalyses dimethylallyl diphosphate + 2 oxidized [2Fe-2S]-[ferredoxin] + H2O = (2E)-4-hydroxy-3-methylbut-2-enyl diphosphate + 2 reduced [2Fe-2S]-[ferredoxin] + 2 H(+). Its pathway is isoprenoid biosynthesis; dimethylallyl diphosphate biosynthesis; dimethylallyl diphosphate from (2E)-4-hydroxy-3-methylbutenyl diphosphate: step 1/1. It functions in the pathway isoprenoid biosynthesis; isopentenyl diphosphate biosynthesis via DXP pathway; isopentenyl diphosphate from 1-deoxy-D-xylulose 5-phosphate: step 6/6. Functionally, catalyzes the conversion of 1-hydroxy-2-methyl-2-(E)-butenyl 4-diphosphate (HMBPP) into a mixture of isopentenyl diphosphate (IPP) and dimethylallyl diphosphate (DMAPP). Acts in the terminal step of the DOXP/MEP pathway for isoprenoid precursor biosynthesis. In Salmonella paratyphi C (strain RKS4594), this protein is 4-hydroxy-3-methylbut-2-enyl diphosphate reductase.